A 288-amino-acid chain; its full sequence is MELIIISGRSGSGKSVALRALEDVGYYCVDNLPLPLIPELAGFLSNSGRSAVVSLDIRNIPENPESIEALLEQLSKLTIQTKIIFLDCERNTLIRRYSDTRRLHPLSNKDLSLESAIDLENTLLEPLYQQANYIIDTTNISSHELAENLRGILRGSTDKALKIVFESFGFKYGLPADADYVFDVRFLPNPHWNPELRPMTGLEQPVIDFLERQTEVHNFIYQTRNYLEMWLPMLEKNNRSYLTIAIGCTGGKHRSVFIAEQLAKYFQSRDKDVQIRHRSLEKHHKKIS.

Position 8–15 (8–15) interacts with ATP; that stretch reads GRSGSGKS. 56–59 is a binding site for GTP; the sequence is DIRN.

It belongs to the RapZ-like family.

Functionally, displays ATPase and GTPase activities. The protein is Nucleotide-binding protein APP7_0339 of Actinobacillus pleuropneumoniae serotype 7 (strain AP76).